Reading from the N-terminus, the 678-residue chain is Serine/threonine-protein kinase mph1 (678 aa).

Disordered regions lie at residues 39-93 (KNDT…NSAL) and 114-209 (LPST…SNSV). Composition is skewed to polar residues over residues 41 to 66 (DTFS…SSGA) and 114 to 125 (LPSTNASHSEVS). Residues 316 to 607 (FIKLGVVGKG…LVHPFLNPLP (292 aa)) enclose the Protein kinase domain. ATP contacts are provided by residues 322–330 (VGKGGSSMV) and Lys345. Asp442 serves as the catalytic Proton acceptor.

This sequence belongs to the protein kinase superfamily. Ser/Thr protein kinase family.

The catalysed reaction is L-seryl-[protein] + ATP = O-phospho-L-seryl-[protein] + ADP + H(+). The enzyme catalyses L-threonyl-[protein] + ATP = O-phospho-L-threonyl-[protein] + ADP + H(+). It carries out the reaction L-tyrosyl-[protein] + ATP = O-phospho-L-tyrosyl-[protein] + ADP + H(+). In terms of biological role, involved in mitotic spindle assembly checkpoint signaling, a process that delays anaphase until chromosomes are bioriented on the spindle, and in the repair of incorrect mitotic kinetochore-spindle microtubule attachments. Phosphorylates spc7/knl1 on MELT motifs; phosphorylation is required for recruitment of the BUB1-BUB3 complex to kinetochores. The protein is Serine/threonine-protein kinase mph1 of Schizosaccharomyces pombe (strain 972 / ATCC 24843) (Fission yeast).